The primary structure comprises 271 residues: 5-deoxy-glucuronate isomerase (271 aa).

It belongs to the isomerase IolB family.

It carries out the reaction 5-deoxy-D-glucuronate = 5-dehydro-2-deoxy-D-gluconate. The protein operates within polyol metabolism; myo-inositol degradation into acetyl-CoA; acetyl-CoA from myo-inositol: step 4/7. Its function is as follows. Involved in the isomerization of 5-deoxy-glucuronate (5DG) to 5-dehydro-2-deoxy-D-gluconate (DKG or 2-deoxy-5-keto-D-gluconate). This chain is 5-deoxy-glucuronate isomerase, found in Bacillus velezensis (strain DSM 23117 / BGSC 10A6 / LMG 26770 / FZB42) (Bacillus amyloliquefaciens subsp. plantarum).